The primary structure comprises 396 residues: Na(+)/H(+) antiporter NhaA (396 aa).

11 consecutive transmembrane segments (helical) span residues 14–34 (ASGI…NSGL), 59–79 (LLLW…GLEV), 95–115 (TFPA…YTFF), 124–144 (AGWA…MALL), 154–174 (VFLL…IALF), 178–198 (QLSL…LWMN), 205–225 (IGLY…SGVH), 254–274 (ALHP…NAGV), 278–298 (GIGL…GLFV), 328–348 (IFAV…IASL), and 363–383 (LGIL…LRMS).

This sequence belongs to the NhaA Na(+)/H(+) (TC 2.A.33) antiporter family.

The protein resides in the cell inner membrane. It carries out the reaction Na(+)(in) + 2 H(+)(out) = Na(+)(out) + 2 H(+)(in). Functionally, na(+)/H(+) antiporter that extrudes sodium in exchange for external protons. This Aeromonas salmonicida (strain A449) protein is Na(+)/H(+) antiporter NhaA.